Here is a 249-residue protein sequence, read N- to C-terminus: 2,3-bisphosphoglycerate-dependent phosphoglycerate mutase (249 aa).

Substrate contacts are provided by residues 9-16 (RHGQSQWN), 22-23 (TG), R61, 88-91 (ERHY), K99, 115-116 (RR), and 184-185 (GN). Catalysis depends on H10, which acts as the Tele-phosphohistidine intermediate. The Proton donor/acceptor role is filled by E88.

The protein belongs to the phosphoglycerate mutase family. BPG-dependent PGAM subfamily. In terms of assembly, homodimer.

It carries out the reaction (2R)-2-phosphoglycerate = (2R)-3-phosphoglycerate. It participates in carbohydrate degradation; glycolysis; pyruvate from D-glyceraldehyde 3-phosphate: step 3/5. Functionally, catalyzes the interconversion of 2-phosphoglycerate and 3-phosphoglycerate. The polypeptide is 2,3-bisphosphoglycerate-dependent phosphoglycerate mutase (Xanthomonas oryzae pv. oryzae (strain PXO99A)).